We begin with the raw amino-acid sequence, 310 residues long: Ribosomal RNA small subunit methyltransferase H (310 aa).

Residues 33–35 (GGH), Asp52, Phe79, Asp98, and Gln105 contribute to the S-adenosyl-L-methionine site.

Belongs to the methyltransferase superfamily. RsmH family.

Its subcellular location is the cytoplasm. It catalyses the reaction cytidine(1402) in 16S rRNA + S-adenosyl-L-methionine = N(4)-methylcytidine(1402) in 16S rRNA + S-adenosyl-L-homocysteine + H(+). In terms of biological role, specifically methylates the N4 position of cytidine in position 1402 (C1402) of 16S rRNA. The protein is Ribosomal RNA small subunit methyltransferase H of Campylobacter jejuni subsp. doylei (strain ATCC BAA-1458 / RM4099 / 269.97).